Reading from the N-terminus, the 168-residue chain is UPF0304 protein MJECS11 (168 aa).

Belongs to the UPF0304 family.

The protein is UPF0304 protein MJECS11 of Methanocaldococcus jannaschii (strain ATCC 43067 / DSM 2661 / JAL-1 / JCM 10045 / NBRC 100440) (Methanococcus jannaschii).